Consider the following 333-residue polypeptide: Probable G-protein coupled receptor 33 (333 aa).

Residues 1 to 30 lie on the Extracellular side of the membrane; it reads MDLINSTDYLINASTLVRNSTQFLAPASKM. N-linked (GlcNAc...) asparagine glycans are attached at residues N5, N12, and N19. A helical membrane pass occupies residues 31-53; sequence IIALSLYISSIIGTITNGLYLWV. Topologically, residues 54–64 are cytoplasmic; sequence LRFKMKQTVNT. A helical membrane pass occupies residues 65-86; that stretch reads LLFFHLILSYFISTMILPFMAT. The Extracellular segment spans residues 87–103; the sequence is SQLQDNHWNFGTALCKV. A disulfide bridge links C101 with C179. A helical membrane pass occupies residues 104–124; sequence FNGTLSLGMFTSVFFLSAIGL. Topologically, residues 125 to 143 are cytoplasmic; it reads DRYLLTLHPVWSQQHRTPR. The helical transmembrane segment at 144 to 165 threads the bilayer; the sequence is WASSIVLGVWISAAALSIPYLI. The Extracellular portion of the chain corresponds to 166 to 209; the sequence is FRETHHDRKGKVTCQNNYAVSTNWESKEMQASRQWIHVACFISR. Residues 210-230 traverse the membrane as a helical segment; the sequence is FLLGFLLPFFIIIFCYERVAS. The Cytoplasmic segment spans residues 231 to 246; that stretch reads KVKERSLFKSSKPFKV. A helical transmembrane segment spans residues 247-268; that stretch reads MMTAIISFFVCWMPYHIHQGLL. The Extracellular segment spans residues 269–283; the sequence is LTTNQSLLLELTLIL. N-linked (GlcNAc...) asparagine glycosylation is present at N272. A helical membrane pass occupies residues 284-303; the sequence is TVLTTSFNTIFSPTLYLFVG. Topologically, residues 304–333 are cytoplasmic; that stretch reads ENFKKVFKKSILALFESTFSEDSSVERTQT.

The protein belongs to the G-protein coupled receptor 1 family. In terms of tissue distribution, expressed in spleen, lung, heart, liver, kidney, pancreas, thymus, gonads and leukocytes.

It is found in the cell membrane. Functionally, orphan receptor; could be a chemoattractant receptor. This Homo sapiens (Human) protein is Probable G-protein coupled receptor 33 (GPR33).